The following is a 384-amino-acid chain: DNA repair protein RAD51 homolog 2 (384 aa).

An interaction with RAD51C region spans residues 1 to 75; sequence MGSKKLKRVG…TAYGIKAQRS (75 aa). Residue 108–115 participates in ATP binding; sequence GPPGCGKT.

Belongs to the RecA family. RAD51 subfamily. Part of the BCDX2 complex consisting of RAD51B, RAD51C, RAD51D and XRCC2; the complex has a ring-like structure arranged into a flat disc around a central channel. The BCDX2 subcomplex RAD51B:RAD51C interacts with RAD51. Interacts with SWSAP1; involved in homologous recombination repair. Interacts with HELQ. Post-translationally, phosphorylated on tyrosine residues by BCR-ABL. As to expression, expressed in a wide range of tissues.

It localises to the nucleus. In terms of biological role, involved in the homologous recombination repair (HRR) pathway of double-stranded DNA breaks arising during DNA replication or induced by DNA-damaging agents. May promote the assembly of presynaptic RAD51 nucleoprotein filaments. Binds single-stranded DNA and double-stranded DNA and has DNA-dependent ATPase activity. Part of the RAD51 paralog protein complex BCDX2 which acts in the BRCA1-BRCA2-dependent HR pathway. Upon DNA damage, BCDX2 acts downstream of BRCA2 recruitment and upstream of RAD51 recruitment. BCDX2 binds predominantly to the intersection of the four duplex arms of the Holliday junction and to junction of replication forks. The BCDX2 complex was originally reported to bind single-stranded DNA, single-stranded gaps in duplex DNA and specifically to nicks in duplex DNA. The BCDX2 subcomplex RAD51B:RAD51C exhibits single-stranded DNA-dependent ATPase activity suggesting an involvement in early stages of the HR pathway. The chain is DNA repair protein RAD51 homolog 2 (RAD51B) from Homo sapiens (Human).